A 68-amino-acid chain; its full sequence is Antimicrobial peptide UyCT3 (68 aa).

Positions 1 to 23 (MKNQFVLLLLAIVFLQMIFQSDA) are cleaved as a signal peptide. Phenylalanine amide is present on phenylalanine 36. A propeptide spanning residues 40-68 (GLENMDKFDELFDGDLSEADLDFLKELMR) is cleaved from the precursor.

It belongs to the non-disulfide-bridged peptide (NDBP) superfamily. Short antimicrobial peptide (group 4) family. The non-amidated UyCT3 does not show antimicrobial activity. As to expression, expressed by the venom gland.

It localises to the secreted. The protein resides in the target cell membrane. In terms of biological role, antimicrobial peptide that inhibits the growth of Gram-positive (S.aureus, MIC=10 uM) and Gram-negative bacteria (E.coli, MIC=15 uM and P.aeruginosa, MIC=6 uM). It also shows 35% of hemolysis when 15 uM are tested (95% at 50 uM). This is Antimicrobial peptide UyCT3 from Urodacus yaschenkoi (Inland robust scorpion).